We begin with the raw amino-acid sequence, 409 residues long: Palmitoyltransferase ZDHHC23 (409 aa).

Residues 1–87 (MTQKGSMKPV…RIPWLRGAKK (87 aa)) lie on the Cytoplasmic side of the membrane. A helical membrane pass occupies residues 88 to 106 (VNISIIPPLVLLPVFLHVA). Residues 107–109 (SWH) lie on the Lumenal side of the membrane. Residues 110–132 (FLLGVVVLTSLPVLALWYYYLTH) traverse the membrane as a helical segment. Residues 133–136 (RRKE) lie on the Cytoplasmic side of the membrane. Residues 137–157 (QTLFFLSLGLFSLGYMYYVFL) form a helical membrane-spanning segment. Over 158-165 (QEVVPKGR) the chain is Lumenal. The helical transmembrane segment at 166-186 (VGPVQLAVLTCGLFLILLALH) threads the bilayer. At 187-302 (RAKKNPGYLS…NSCVGESNHQ (116 aa)) the chain is on the cytoplasmic side. The tract at residues 215–255 (RKGQEKTKGFPGADMSGSLNNRTTKDDPKGSSKMPAGSPTK) is disordered. Positions 259–309 (DWCAKCQLVRPARAWHCRICGICVRRMDHHCVWINSCVGESNHQAFILALL) constitute a DHHC domain. Cys-289 serves as the catalytic S-palmitoyl cysteine intermediate. A helical transmembrane segment spans residues 303–323 (AFILALLIFLLTSVYGITLTL). Topologically, residues 324–331 (DTICRDRS) are lumenal. The helical transmembrane segment at 332–352 (VFTALFYCPGVYANYSSALSF) threads the bilayer. A topological domain (cytoplasmic) is located at residue Thr-353. A helical transmembrane segment spans residues 354–374 (CVWYSVIITAGMAYIFLIQLI). The Lumenal segment spans residues 375–409 (NISYNVTEREVQQALRQKTGRRLLCGLIVDTGLLG).

The protein belongs to the DHHC palmitoyltransferase family. Interacts with NOS1.

Its subcellular location is the golgi apparatus membrane. It localises to the golgi apparatus. The protein localises to the trans-Golgi network membrane. The catalysed reaction is L-cysteinyl-[protein] + hexadecanoyl-CoA = S-hexadecanoyl-L-cysteinyl-[protein] + CoA. Functionally, palmitoyltransferase that could catalyze the addition of palmitate onto various protein substrates and be involved in a variety of cellular processes. Palmitoyltransferase that mediates palmitoylation of KCNMA1, regulating localization of KCNMA1 to the plasma membrane. May be involved in NOS1 regulation and targeting to the synaptic membrane. In Homo sapiens (Human), this protein is Palmitoyltransferase ZDHHC23.